The sequence spans 227 residues: UPF0758 protein SSA_1218 (227 aa).

One can recognise an MPN domain in the interval 104–226 (QIMGSQKLAR…YYSYREETDM (123 aa)). His175, His177, and Asp188 together coordinate Zn(2+). Residues 175–188 (HNHPSGSVVPSRND) carry the JAMM motif motif.

This sequence belongs to the UPF0758 family.

This Streptococcus sanguinis (strain SK36) protein is UPF0758 protein SSA_1218.